The sequence spans 181 residues: NAD(P)H-quinone oxidoreductase subunit I, chloroplastic (181 aa).

2 consecutive 4Fe-4S ferredoxin-type domains span residues 52-81 (GRIHFEFDKCIACEVCVRVCPINLPVVDWE) and 92-121 (KSYSIDFGVCIFCGNCVEFCPTNCLSMTEE). Positions 61, 64, 67, 71, 101, 104, 107, and 111 each coordinate [4Fe-4S] cluster.

Belongs to the complex I 23 kDa subunit family. In terms of assembly, NDH is composed of at least 16 different subunits, 5 of which are encoded in the nucleus. The cofactor is [4Fe-4S] cluster.

The protein localises to the plastid. The protein resides in the chloroplast thylakoid membrane. It catalyses the reaction a plastoquinone + NADH + (n+1) H(+)(in) = a plastoquinol + NAD(+) + n H(+)(out). The enzyme catalyses a plastoquinone + NADPH + (n+1) H(+)(in) = a plastoquinol + NADP(+) + n H(+)(out). Functionally, NDH shuttles electrons from NAD(P)H:plastoquinone, via FMN and iron-sulfur (Fe-S) centers, to quinones in the photosynthetic chain and possibly in a chloroplast respiratory chain. The immediate electron acceptor for the enzyme in this species is believed to be plastoquinone. Couples the redox reaction to proton translocation, and thus conserves the redox energy in a proton gradient. The polypeptide is NAD(P)H-quinone oxidoreductase subunit I, chloroplastic (Staurastrum punctulatum (Green alga)).